We begin with the raw amino-acid sequence, 646 residues long: Acetyl-coenzyme A synthetase (646 aa).

CoA is bound by residues 190–193 (RAGN) and Thr309. ATP contacts are provided by residues 385–387 (GEP), 409–414 (DTWWQT), Asp498, and Arg513. CoA is bound at residue Ser521. Arg524 is an ATP binding site. Val535, His537, and Val540 together coordinate Mg(2+). CoA is bound at residue Arg582. Lys607 carries the N6-acetyllysine modification.

Belongs to the ATP-dependent AMP-binding enzyme family. Mg(2+) is required as a cofactor. In terms of processing, acetylated. Deacetylation by the SIR2-homolog deacetylase activates the enzyme.

It carries out the reaction acetate + ATP + CoA = acetyl-CoA + AMP + diphosphate. In terms of biological role, catalyzes the conversion of acetate into acetyl-CoA (AcCoA), an essential intermediate at the junction of anabolic and catabolic pathways. AcsA undergoes a two-step reaction. In the first half reaction, AcsA combines acetate with ATP to form acetyl-adenylate (AcAMP) intermediate. In the second half reaction, it can then transfer the acetyl group from AcAMP to the sulfhydryl group of CoA, forming the product AcCoA. The chain is Acetyl-coenzyme A synthetase from Pseudoalteromonas translucida (strain TAC 125).